Consider the following 243-residue polypeptide: Phosphoadenosine 5'-phosphosulfate reductase (243 aa).

The active-site Nucleophile; cysteine thiosulfonate intermediate is cysteine 239.

This sequence belongs to the PAPS reductase family. CysH subfamily.

The protein resides in the cytoplasm. It carries out the reaction [thioredoxin]-disulfide + sulfite + adenosine 3',5'-bisphosphate + 2 H(+) = [thioredoxin]-dithiol + 3'-phosphoadenylyl sulfate. It functions in the pathway sulfur metabolism; hydrogen sulfide biosynthesis; sulfite from sulfate: step 3/3. Catalyzes the formation of sulfite from phosphoadenosine 5'-phosphosulfate (PAPS) using thioredoxin as an electron donor. The protein is Phosphoadenosine 5'-phosphosulfate reductase of Erwinia tasmaniensis (strain DSM 17950 / CFBP 7177 / CIP 109463 / NCPPB 4357 / Et1/99).